The following is a 741-amino-acid chain: Prestin (741 aa).

Topologically, residues 1–79 (MDHVEETEIL…WLPAYRFKEY (79 aa)) are cytoplasmic. Residues 80–105 (VLGDIVSGISTGVLQLPQGLAFAMLA) traverse the membrane as a helical segment. Residues 106–109 (AVPP) lie on the Extracellular side of the membrane. The chain crosses the membrane as a helical span at residues 110–125 (VFGLYSSFYPVIMYCF). Topologically, residues 126–137 (FGTSRHISIGPF) are cytoplasmic. Residues 138 to 147 (AVISLMIGGV) traverse the membrane as a helical segment. Topologically, residues 148–178 (AVRLVPDDIVIPGGVNATNSTEARDALRVKV) are extracellular. Positions 158–168 (IPGGVNATNST) match the Involved in motor function motif. N-linked (GlcNAc...) asparagine glycosylation is found at Asn163 and Asn166. 2 helical membrane passes run 179–208 (AMSV…LTEP) and 209–230 (LVRG…KYLF). The Extracellular portion of the chain corresponds to 231-243 (GVKTKRYSGIFSV). Residues 244 to 248 (VYSTV) constitute an intramembrane region (helical). The Extracellular portion of the chain corresponds to 249–261 (AVLQNVKNLNVCS). The helical transmembrane segment at 262-283 (LGVGLMVFGLLLGGKEFNERFK) threads the bilayer. Over 284-291 (EKLPAPIP) the chain is Cytoplasmic. The chain crosses the membrane as a helical span at residues 292–303 (LEFFAVVMGTGI). Residues 304 to 338 (SAGFSLHESYNVDVVGTLPLGLLPPANPDTSLFHL) lie on the Extracellular side of the membrane. A helical transmembrane segment spans residues 339–361 (VYVDAIAIAIVGFSVTISMAKTL). Residues 362–370 (ANKHGYQVD) are Cytoplasmic-facing. The chain crosses the membrane as a helical span at residues 371-388 (GNQELIALGLCNSTGSLF). The Extracellular segment spans residues 389–396 (QTFAISCS). A helical membrane pass occupies residues 397–406 (LSRSLVQEGT). Ser398 serves as a coordination point for salicylate. Over 407 to 410 (GGKT) the chain is Cytoplasmic. A helical transmembrane segment spans residues 411 to 429 (QLAGCLASLMILLVILATG). Residues 430–436 (FLFESLP) lie on the Extracellular side of the membrane. A helical membrane pass occupies residues 437-459 (QAVLSAIVIVNLKGMFMQFSDLP). Residues 460 to 467 (FFWRTSKI) lie on the Cytoplasmic side of the membrane. The chain crosses the membrane as a helical span at residues 468-483 (ELTIWLTTFVSSLFLG). Leu484 is a topological domain (extracellular). A helical membrane pass occupies residues 485–498 (DYGLITAVIIALMT). Over 499–741 (VIYRTQSPSY…DSEPNATPEA (243 aa)) the chain is Cytoplasmic. Residues 505 to 718 (SPSYIVLGQL…AVLGSQVREA (214 aa)) are extended region for STAS domain. The STAS domain occupies 525 to 713 (AYEEVKEVPG…HSIHDAVLGS (189 aa)). Positions 718 to 741 (ALAEQEATAAPPQEDSEPNATPEA) are disordered. Residues 721 to 730 (EQEATAAPPQ) show a composition bias toward low complexity.

The protein belongs to the SLC26A/SulP transporter (TC 2.A.53) family. Homodimer. Interacts (via STAS domain) with CALM; this interaction is calcium-dependent and the STAS domain interacts with only one lobe of CALM which is an elongated conformation.

It localises to the cell membrane. It catalyses the reaction 2 hydrogencarbonate(in) + chloride(out) = 2 hydrogencarbonate(out) + chloride(in). Its function is as follows. Voltage-sensitive motor protein that drives outer hair cell (OHC) electromotility (eM) and participates in sound amplification in the hearing organ. Converts changes in the transmembrane electric potential into mechanical displacements resulting in the coupling of its expansion to movement of a charged voltage sensor across the lipid membrane. The nature of the voltage sensor is not completely clear, and two models compete. In the first model, acts as an incomplete transporter where intracellular chloride anion acts as extrinsic voltage sensor that drives conformational change in the protein which is sufficient to produce a length change in the plane of the membrane and hence in the length of the OHC. The second model in which multiple charged amino acid residues are distributed at the intracellular and extracellular membrane interfaces that form an intrinsic voltage sensor, whose movement produces the non-linear capacitance (NLC). However, the effective voltage sensor may be the result of a hybrid voltage sensor assembled from intrinsic charge (charged residues) and extrinsic charge (bound anion). Notably, binding of anions to the anion-binding pocket partially neutralizes the intrinsic positive charge rather than to form an electrically negative sensor, therefore remaining charge may serve as voltage sensor that, after depolarization, moves from down (expanded state) to up (contracted) conformation, which is accompanied by an eccentric contraction of the intermembrane cross-sectional area of the protein as well as a major increase in the hydrophobic thickness of the protein having as consequences the plasma membrane thickening and the cell contraction after membrane depolarization. The anion-binding pocket transits from the inward-open (Down) state, where it is exposed toward the intracellular solvent in the absence of anion, to the occluded (Up) state upon anion binding. Salicylate competes for the anion-binding site and inhibits the voltage-sensor movement, and therefore inhibits the charge transfer and electromotility by displacing Cl(-) from the anion-binding site and by preventing the structural transitions to the contracted state. In addition, can act as a weak Cl(-)/HCO3 (-) antiporter across the cell membrane and so regulate the intracellular pH of the outer hair cells (OHCs), while firstly found as being unable to mediate electrogenic anion transport. Moreover, supports a role in cardiac mechanical amplification serving as an elastic element to enhance the actomyosin- based sarcomere contraction system. The sequence is that of Prestin from Tursiops truncatus (Atlantic bottle-nosed dolphin).